A 346-amino-acid chain; its full sequence is Histidinol-phosphate aminotransferase (346 aa).

N6-(pyridoxal phosphate)lysine is present on lysine 209.

Belongs to the class-II pyridoxal-phosphate-dependent aminotransferase family. Histidinol-phosphate aminotransferase subfamily. In terms of assembly, homodimer. It depends on pyridoxal 5'-phosphate as a cofactor.

It catalyses the reaction L-histidinol phosphate + 2-oxoglutarate = 3-(imidazol-4-yl)-2-oxopropyl phosphate + L-glutamate. The protein operates within amino-acid biosynthesis; L-histidine biosynthesis; L-histidine from 5-phospho-alpha-D-ribose 1-diphosphate: step 7/9. This is Histidinol-phosphate aminotransferase from Flavobacterium psychrophilum (strain ATCC 49511 / DSM 21280 / CIP 103535 / JIP02/86).